Consider the following 298-residue polypeptide: HTH-type transcriptional regulator YhaJ (298 aa).

In terms of domain architecture, HTH lysR-type spans 7-64 (LTLEALRVMDAIDRRGSFAAAADELGRVPSALSYTMQKLEEELDVVLFDRSGHRTKFT). Positions 24-43 (FAAAADELGRVPSALSYTMQ) form a DNA-binding region, H-T-H motif.

This sequence belongs to the LysR transcriptional regulatory family.

Its function is as follows. Positive regulator partially required for expression of genes in the locus of effacement (LEE) large pathogenicity island (PAI). Also partially responsible for expression of neighboring gene dlsT (yhaO) during late exponential growth. Binds to DNA of promoter 1 in LEE and DNA from the dlsT promoter region. The sequence is that of HTH-type transcriptional regulator YhaJ (yhaJ) from Escherichia coli O157:H7.